A 247-amino-acid chain; its full sequence is Chromosome partition protein MukE (247 aa).

The tract at residues 213-247 (AQSLQEEKNGLKDNMDQSAVENEQYFENEENEGIA) is disordered. Positions 217–227 (QEEKNGLKDNM) are enriched in basic and acidic residues. Acidic residues predominate over residues 236–247 (QYFENEENEGIA).

This sequence belongs to the MukE family. As to quaternary structure, interacts, and probably forms a ternary complex, with MukF and MukB. The complex formation is stimulated by calcium or magnesium.

It is found in the cytoplasm. It localises to the nucleoid. Its function is as follows. Involved in chromosome condensation, segregation and cell cycle progression. May participate in facilitating chromosome segregation by condensation DNA from both sides of a centrally located replisome during cell division. Probably acts via its interaction with MukB and MukF. The protein is Chromosome partition protein MukE of Histophilus somni (strain 2336) (Haemophilus somnus).